The primary structure comprises 425 residues: Serine--tRNA ligase (425 aa).

L-serine is bound at residue 233-235; it reads TAE. ATP contacts are provided by residues 264-266 and V280; that span reads RRE. E287 contacts L-serine. Position 351–354 (351–354) interacts with ATP; it reads EVSS. S387 is an L-serine binding site.

The protein belongs to the class-II aminoacyl-tRNA synthetase family. Type-1 seryl-tRNA synthetase subfamily. Homodimer. The tRNA molecule binds across the dimer.

Its subcellular location is the cytoplasm. It carries out the reaction tRNA(Ser) + L-serine + ATP = L-seryl-tRNA(Ser) + AMP + diphosphate + H(+). The enzyme catalyses tRNA(Sec) + L-serine + ATP = L-seryl-tRNA(Sec) + AMP + diphosphate + H(+). Its pathway is aminoacyl-tRNA biosynthesis; selenocysteinyl-tRNA(Sec) biosynthesis; L-seryl-tRNA(Sec) from L-serine and tRNA(Sec): step 1/1. In terms of biological role, catalyzes the attachment of serine to tRNA(Ser). Is also able to aminoacylate tRNA(Sec) with serine, to form the misacylated tRNA L-seryl-tRNA(Sec), which will be further converted into selenocysteinyl-tRNA(Sec). In Gemmatimonas aurantiaca (strain DSM 14586 / JCM 11422 / NBRC 100505 / T-27), this protein is Serine--tRNA ligase.